A 424-amino-acid polypeptide reads, in one-letter code: Chloroquine resistance transporter (424 aa).

The Cytoplasmic segment spans residues 1–58 (MKFASKKNNQKNSSKNDERYRELDNLVQEGNGSRLGGGSCLGKCAHVFKLIFKEIKDN). The helical transmembrane segment at 59 to 79 (IFIYILSIIYLSVCVMNKIFA) threads the bilayer. At 80-90 (KRTLNKIGNYS) the chain is on the vacuolar side. A glycan (N-linked (GlcNAc...) asparagine) is linked at asparagine 88. The chain crosses the membrane as a helical span at residues 91–111 (FVTSETHNFICMIMFFIVYSL). Topologically, residues 112–127 (FGNKKGNSKERHRSFN) are cytoplasmic. Residues 128–148 (LQFFAISMLDACSVILAFIGL) form a helical membrane-spanning segment. Over 149–154 (TRTTGN) the chain is Vacuolar. The helical transmembrane segment at 155-175 (IQSFVLQLSIPINMFFCFLIL) threads the bilayer. The Cytoplasmic portion of the chain corresponds to 176–178 (RYR). A helical transmembrane segment spans residues 179 to 199 (YHLYNYLGAVIIVVTIALVEM). Residues 200–209 (KLSFETQEEN) lie on the Vacuolar side of the membrane. The helical transmembrane segment at 210-230 (SIIFNLVLISALIPVCFSNMT) threads the bilayer. Over 231-248 (REIVFKKYKIDILRLNAM) the chain is Cytoplasmic. The helical transmembrane segment at 249 to 269 (VSFFQLFTSCLILPVYTLPFL) threads the bilayer. At 270–317 (KQLHLPYNEIWTNIKNGFACLFLGRNTVVENCGLGMAKLCDDCDGAWK) the chain is on the vacuolar side. 2 disulfide bridges follow: cysteine 289–cysteine 312 and cysteine 301–cysteine 309. A helical membrane pass occupies residues 318–338 (TFALFSFFNICDNLITSYIID). Topologically, residues 339 to 346 (KFSTMTYT) are cytoplasmic. The helical transmembrane segment at 347 to 367 (IVSCIQGPAIAIAYYFKFLAG) threads the bilayer. Residues 368–377 (DVVREPRLLD) are Vacuolar-facing. A helical transmembrane segment spans residues 378-398 (FVTLFGYLFGSIIYRVGNIIL). The Cytoplasmic portion of the chain corresponds to 399-424 (ERKKMRNEENEDSEGELTNVDSIITQ).

Belongs to the CRT-like transporter family. In terms of assembly, monomer.

It is found in the vacuole membrane. It catalyses the reaction L-arginine(in) = L-arginine(out). It carries out the reaction L-lysine(in) = L-lysine(out). The enzyme catalyses L-histidine(out) = L-histidine(in). The catalysed reaction is histamine(out) = histamine(in). It catalyses the reaction spermidine(in) = spermidine(out). It carries out the reaction Fe(3+)(in) = Fe(3+)(out). The enzyme catalyses Fe(2+)(in) = Fe(2+)(out). Transporter activity is trans-stimulated by host-derived peptides containing 4-11 amino acids. Trans-stimulation by hemoglobin-derived peptide VDPVNF is pH-dependent and sodium-independent. Saquinavir trans-stimulates transport of hemoglobin-derived peptide VDPVNF. Protons are non-competitive inhibitors of chloroquine transport. Functionally, nutrient transporter. Substrate transport is pH-dependent. Can transport arginine, lysine, histidine, peptides, histamine and spermidine. May modulate activity of endogenous transporters. Involved in maintaining the osmotic homeostasis of the digestive vacuole. Required for the asexual intraerythrocytic proliferation of parasites. Can transport Fe(2+) and Fe(3+). In Plasmodium falciparum, this protein is Chloroquine resistance transporter.